Reading from the N-terminus, the 33-residue chain is Ice-structuring protein GS-5 (33 aa).

A Blocked amino end (Met) modification is found at Met1.

Belongs to the type-I AFP family.

Its function is as follows. Antifreeze proteins lower the blood freezing point. In Myoxocephalus aenaeus (Grubby sculpin), this protein is Ice-structuring protein GS-5.